Reading from the N-terminus, the 442-residue chain is 3-phosphoshikimate 1-carboxyvinyltransferase (442 aa).

3-phosphoshikimate is bound by residues K25, S26, and R30. Residue K25 participates in phosphoenolpyruvate binding. Residues G96 and R124 each contribute to the phosphoenolpyruvate site. S171, S172, Q173, S203, D325, and K352 together coordinate 3-phosphoshikimate. Q173 lines the phosphoenolpyruvate pocket. The active-site Proton acceptor is D325. R356, R400, and K425 together coordinate phosphoenolpyruvate.

Belongs to the EPSP synthase family. As to quaternary structure, monomer.

Its subcellular location is the cytoplasm. It catalyses the reaction 3-phosphoshikimate + phosphoenolpyruvate = 5-O-(1-carboxyvinyl)-3-phosphoshikimate + phosphate. The protein operates within metabolic intermediate biosynthesis; chorismate biosynthesis; chorismate from D-erythrose 4-phosphate and phosphoenolpyruvate: step 6/7. Catalyzes the transfer of the enolpyruvyl moiety of phosphoenolpyruvate (PEP) to the 5-hydroxyl of shikimate-3-phosphate (S3P) to produce enolpyruvyl shikimate-3-phosphate and inorganic phosphate. The sequence is that of 3-phosphoshikimate 1-carboxyvinyltransferase from Bordetella pertussis (strain Tohama I / ATCC BAA-589 / NCTC 13251).